The primary structure comprises 2885 residues: E3 ubiquitin-protein ligase hyd (2885 aa).

The segment at 83–138 (SDAKCSTSGGSGTASASKAPSSSRPMARSRARLLRATGRSNSTGQGSGSRSTGVII) is disordered. 2 stretches are compositionally biased toward low complexity: residues 95-108 (TASASKAPSSSRPM) and 116-138 (LRATGRSNSTGQGSGSRSTGVII). The 43-residue stretch at 154 to 196 (YVPEELISQAEVVLQGKSRNLIIRELQRTNLDVNLAVNNLLSR) folds into the UBA domain. Residues 266-276 (ANANAADSNQS) show a composition bias toward low complexity. Disordered stretches follow at residues 266-291 (ANANAADSNQSTTRSTSSGTALTGNS), 580-664 (NNLN…GRKD), and 711-731 (AATSSTSNTASTSKEEGKEDD). Polar residues-rich tracts occupy residues 277-291 (TTRSTSSGTALTGNS) and 598-615 (AMPSTGSSKNGQSFSNSK). A phosphoserine mark is found at Ser-628 and Ser-631. Positions 650 to 664 (TTKEDSNAPQEGRKD) are enriched in basic and acidic residues. A compositionally biased stretch (low complexity) spans 711-722 (AATSSTSNTAST). The residue at position 967 (Ser-967) is a Phosphoserine. Positions 1008-1032 (ASSSNENSSFATMSSSAAGSASSTS) are enriched in low complexity. A disordered region spans residues 1008–1035 (ASSSNENSSFATMSSSAAGSASSTSRDN). Residues 1217–1285 (DTCSFTWTGA…EKCKCKALIA (69 aa)) form a UBR-type zinc finger. Position 1362 is a phosphoserine (Ser-1362). The segment at 1642–1761 (NEDGMQDDES…IRSRDTARSS (120 aa)) is disordered. Residues 1669-1681 (NQSNQEVQRSVQA) are compositionally biased toward polar residues. Residues 1696–1721 (LEDESGDSSAQEEDGSEDGESDDQSD) are compositionally biased toward acidic residues. The segment covering 1735 to 1749 (TNSNARSDLAPQTMQ) has biased composition (polar residues). A Phosphoserine modification is found at Ser-2037. Positions 2124 to 2143 (IDSSKTGDGNVTNKAEGSTD) are disordered. The residue at position 2183 (Ser-2183) is a Phosphoserine. The interval 2473–2492 (NLDARPYTPPNSSDNATPES) is disordered. Positions 2482 to 2492 (PNSSDNATPES) are enriched in polar residues. The region spanning 2484-2561 (SSDNATPESL…AIEIITFKQK (78 aa)) is the PABC domain. Residue Ser-2574 is modified to Phosphoserine. An HECT domain is found at 2782–2885 (FNDESSEGPD…AIKSKNFGFV (104 aa)). Cys-2854 serves as the catalytic Glycyl thioester intermediate.

The protein belongs to the UBR5 family.

The protein localises to the nucleus. It is found in the cytoplasm. The enzyme catalyses S-ubiquitinyl-[E2 ubiquitin-conjugating enzyme]-L-cysteine + [acceptor protein]-L-lysine = [E2 ubiquitin-conjugating enzyme]-L-cysteine + N(6)-ubiquitinyl-[acceptor protein]-L-lysine.. Its pathway is protein modification; protein ubiquitination. Its function is as follows. E3 ubiquitin-protein ligase which accepts ubiquitin from an E2 ubiquitin-conjugating enzyme in the form of a thioester and then directly transfers the ubiquitin to targeted substrate. Required for regulation of cell proliferation in imaginal disks and germ cells. Acts as a negative regulator of hh, ci and dpp expression in the anterior of the eye disk. Acts as a positive regulator of the canonical Wnt signaling pathway by mediating ubiquitination and degradation of gro. Catalyzes 'Lys-63'-linked polyubiquitination of akirin, thereby activating the immune deficiency pathway (Imd). The sequence is that of E3 ubiquitin-protein ligase hyd (hyd) from Drosophila melanogaster (Fruit fly).